The following is a 746-amino-acid chain: PAN2-PAN3 deadenylation complex subunit pan3 (746 aa).

A C3H1-type zinc finger spans residues 7 to 35; it reads PKNQKQCKNIALHGYCRNSDKCEFSHELT. Residues 64-97 are compositionally biased toward low complexity; that stretch reads QQQQQQQNSNGNGSNNTATSNNPIISPNSNIASP. Disordered stretches follow at residues 64–100, 169–205, and 219–275; these read QQQQ…PLKK, DDQH…NMNN, and NASP…PSLQ. The span at 196–205 shows a compositional bias: polar residues; that stretch reads NNGIDPNMNN. Residues 221 to 275 are compositionally biased toward low complexity; sequence SPQSYQQQFQQPNPSPQSSSQQQQQQQQQQQQAVYQQQQQQQPSSQPLAQNPSLQ. The segment at 351–610 is pseudokinase domain; sequence DPNDPRIKNI…NIDEVVLMIS (260 aa). Residues R407, 457–464, and 509–510 contribute to the ATP site; these read EFFPGSET and SK. Residues 611–649 adopt a coiled-coil conformation; sequence GRLLQENNYLHTYTDDLETELSKEYENGRLFRLVTKLGF. A knob domain region spans residues 650-746; it reads INERPLYDMD…SELVSQKSHI (97 aa).

Belongs to the protein kinase superfamily. PAN3 family. Homodimer. Forms a heterotrimer with a catalytic subunit PAN2 to form the poly(A)-nuclease (PAN) deadenylation complex. Interacts (via PAM-2 motif) with poly(A)-binding protein (via PABC domain), conferring substrate specificity of the enzyme complex.

The protein resides in the cytoplasm. Regulatory subunit of the poly(A)-nuclease (PAN) deadenylation complex, one of two cytoplasmic mRNA deadenylases involved in mRNA turnover. PAN specifically shortens poly(A) tails of RNA and the activity is stimulated by poly(A)-binding protein (PABP). PAN deadenylation is followed by rapid degradation of the shortened mRNA tails by the CCR4-NOT complex. Deadenylated mRNAs are then degraded by two alternative mechanisms, namely exosome-mediated 3'-5' exonucleolytic degradation, or deadenylation-dependent mRNA decaping and subsequent 5'-3' exonucleolytic degradation by XRN1. PAN3 acts as a positive regulator for PAN activity, recruiting the catalytic subunit PAN2 to mRNA via its interaction with RNA and PABP. The polypeptide is PAN2-PAN3 deadenylation complex subunit pan3 (Dictyostelium discoideum (Social amoeba)).